The chain runs to 218 residues: Glycerol-3-phosphate acyltransferase (218 aa).

Helical transmembrane passes span 4–24, 54–74, 80–100, 107–127, and 130–150; these read IALGMIIFAYLCGSISSAILI, TAAIVLICDVLKGMIPVWLAY, PFYLGITAIAACLGHIYPIFF, GVATAFGAIAAIGWDLTGLMM, and WLLTILLSGYSSLGAIVSALI.

This sequence belongs to the PlsY family. Probably interacts with PlsX.

It localises to the cell inner membrane. It carries out the reaction an acyl phosphate + sn-glycerol 3-phosphate = a 1-acyl-sn-glycero-3-phosphate + phosphate. It participates in lipid metabolism; phospholipid metabolism. Catalyzes the transfer of an acyl group from acyl-phosphate (acyl-PO(4)) to glycerol-3-phosphate (G3P) to form lysophosphatidic acid (LPA). This enzyme utilizes acyl-phosphate as fatty acyl donor, but not acyl-CoA or acyl-ACP. The chain is Glycerol-3-phosphate acyltransferase from Photorhabdus laumondii subsp. laumondii (strain DSM 15139 / CIP 105565 / TT01) (Photorhabdus luminescens subsp. laumondii).